A 388-amino-acid polypeptide reads, in one-letter code: Outer membrane protein assembly factor BamB (388 aa).

The first 21 residues, Met-1–Ala-21, serve as a signal peptide directing secretion. Cys-22 carries the N-palmitoyl cysteine lipid modification. The S-diacylglycerol cysteine moiety is linked to residue Cys-22.

Belongs to the BamB family. Part of the Bam complex.

It is found in the cell outer membrane. Functionally, part of the outer membrane protein assembly complex, which is involved in assembly and insertion of beta-barrel proteins into the outer membrane. In Kangiella koreensis (strain DSM 16069 / JCM 12317 / KCTC 12182 / SW-125), this protein is Outer membrane protein assembly factor BamB.